A 581-amino-acid chain; its full sequence is MTICSCEETINEFEMLTRDAARVQKDTLKKILEINASAEYLQNFGLGGRTDAESYKSCIPLCVHNDIEPYIQRIVDGDTSPVVTGEPITNLSLSSGTTHGKPKFIPFNDELLETTLQIYRTSYAFRNREYPIGQGKALQFVYGSKQVITKGGILATTATTNLYRRQRYKEGMKDIQSQCCSPDEVIFGPDFHQSLYCHLLCGLIYSEEVHSVFSTFAHSLVHAFQTFEEVWEDLCTDIRDGVLSKKVTAPSIREAVSKILKPNPELADSIYKKCIGLSNWYGVIPALWPNAKYVYGIMTGSMEPYLKKLRHYAGNLPLISADYGASEGWVGSNIDPTVPPEQVTYAVLPQVGYFEFIPLEKPIGEETENSASIHYIESDPVGLTEVEVGKIYEVVITNFAGLYRYRLGDVVKIARFHNSTPELQFICRRSLVLSINIDKNTEKDLQLAVEEASKFLEGEKLEVMDFTSFVERSSDPGRYVIFWELSGDASDEVLSSCANALDLAFIDAGYTGSRKIKTIGPLELRILRKGTFKEILDHFLSLGGAVSQFKTPRFVNPSNSKVLQILSRNVTQSYFSTAYGF.

Ser92 is an ATP binding site. Jasmonate is bound at residue Ser95. ATP is bound by residues Thr115, Asn161, and 324-329 (GASEGW). An L-alpha-amino acid is bound at residue 159-163 (TTNLY). Residues 321-324 (ADYG) and Ser326 each bind jasmonate. 534 to 538 (EILDH) provides a ligand contact to an L-alpha-amino acid. Lys561 provides a ligand contact to ATP.

The protein belongs to the IAA-amido conjugating enzyme family. In terms of tissue distribution, expressed in green shoots, roots and flowers.

The catalysed reaction is a jasmonate + an L-alpha-amino acid + ATP = a jasmonyl-L-amino acid + AMP + diphosphate + H(+). In terms of biological role, catalyzes the synthesis of jasmonate-amino acid conjugates by adenylation. Catalyzes the conjugation of jasmonate (JA) to Ile when expressed in a heterologous system (E.coli). Catalyzes in vitro the conjugation of jasmonate (JA) to Ile, Phe, Cys, Leu, Met, Ala, Val and Trp. Involved in the production of JA-Ile in response to infection by the rice blast fungus Magnaporthe oryzae. Required for the accumulation of the flavonoid phytoalexin sakuranetin in response to infection by the rice blast fungus. Involved in herbivory-induced JA-Ile accumulation. Involved in the production of JA-Ile in response to wounding. Required for modulation of light and JA signaling in photomorphogenesis. Required for normal seed development. Required for optimal flower opening and closing and anther dehiscence. May catalyze the synthesis of indole-3-acetic acid (IAA)-amino acid conjugates, providing a mechanism for the plant to cope with the presence of excess auxin. In Oryza sativa subsp. japonica (Rice), this protein is Jasmonoyl--L-amino acid synthetase GH3.5.